A 434-amino-acid chain; its full sequence is Glucose-1-phosphate adenylyltransferase (434 aa).

Alpha-D-glucose 1-phosphate contacts are provided by residues Y112, G178, 193–194 (EK), and S211.

It belongs to the bacterial/plant glucose-1-phosphate adenylyltransferase family. Homotetramer.

The catalysed reaction is alpha-D-glucose 1-phosphate + ATP + H(+) = ADP-alpha-D-glucose + diphosphate. Its pathway is glycan biosynthesis; glycogen biosynthesis. Involved in the biosynthesis of ADP-glucose, a building block required for the elongation reactions to produce glycogen. Catalyzes the reaction between ATP and alpha-D-glucose 1-phosphate (G1P) to produce pyrophosphate and ADP-Glc. The protein is Glucose-1-phosphate adenylyltransferase of Mannheimia succiniciproducens (strain KCTC 0769BP / MBEL55E).